A 1078-amino-acid polypeptide reads, in one-letter code: Rho family-interacting cell polarization regulator 2 (1078 aa).

Phosphoserine occurs at positions 46 and 62. Positions 80 to 138 (MHNLGHKNNNTPKEPQPKRVEEVYRALKNGLDEYLEFHQTELDKLTAQLKDMKRNSRLG) are involved in cell filopodia formation. Residues 108–137 (NGLDEYLEFHQTELDKLTAQLKDMKRNSRL) adopt a coiled-coil conformation. Ser366 is modified (phosphoserine). Over residues 488-508 (SSLSSQNEGTEDSSSASSRNS) the composition is skewed to polar residues. The disordered stretch occupies residues 488-534 (SSLSSQNEGTEDSSSASSRNSLGEDHEPKSHPKSDTVEPGKPGVATR). Residues 509–525 (LGEDHEPKSHPKSDTVE) show a composition bias toward basic and acidic residues. The residue at position 582 (Ser582) is a Phosphoserine.

This sequence belongs to the RIPOR family. In terms of assembly, homooligomer; homooligomerization is regulated by RHOC and leads to the formation of concatemers through the association of N- and C-termini. Interacts (phosphorylated form) with 14-3-3 proteins; these interactions occur during myogenic cell differentiation and also induces T cell proliferation arrest. Interacts (phosphorylated form) with HDAC6; this interaction occurs during early myogenic differentiation, prevents HDAC6 to deacetylate tubulin and also induces T cell proliferation arrest. Interacts with DYSF; this interaction occurs during early myogenic differentiation. Interacts with MYOF. Interacts (via active GTP- or inactive GDP-bound forms) with RHOA; this interaction is direct, blocks the loading of GTP to RHOA and decreases upon chemokine CCL19 stimulation in primary T lymphocytes. Interacts with RHOC. Interacts (via phosphorylated form) with YWHAB; this interaction occurs in a chemokine-dependent manner and does not compete for binding of RIPOR2 with RHOA nor blocks inhibition of RIPOR2-mediated RHOA activity. Interacts with YWHAE. Interacts with YWHAQ. In terms of processing, phosphorylated. Chemokine-induced phosphorylation in neutrophils occurs in a PKC- and AKT-dependent manner, resulting in RIPOR2 interaction with YWHAB and stabilization. Phosphorylated by PKCA, AKT1 and MAPKAPK1A; in vitro. Expressed in the cochlea. Expressed in inner hair cells and outer hair cells and Hensen's cells (at protein level). Expressed in the brain, cerebellum, spinal cord, retina, heart, spleen liver, kidney, bladder, muscle and lung. Expressed in the cochlea of the inner ear.

The protein resides in the cytoplasm. It is found in the cytoskeleton. The protein localises to the cell projection. Its subcellular location is the filopodium. It localises to the stereocilium. The protein resides in the stereocilium membrane. It is found in the apical cell membrane. Functionally, acts as an inhibitor of the small GTPase RHOA and plays several roles in the regulation of myoblast and hair cell differentiation, lymphocyte T proliferation and neutrophil polarization. Plays a role in fetal mononuclear myoblast differentiation by promoting filopodia and myotube formation. Maintains naive T lymphocytes in a quiescent state and prevents chemokine-induced T lymphocyte responses, such as cell adhesion, polarization and migration. Involved also in the regulation of neutrophil polarization, chemotaxis and adhesion. Required for normal development of inner and outer hair cell stereocilia within the cochlea of the inner ear. Plays a role for maintaining the structural organization of the basal domain of stereocilia. Involved in mechanosensory hair cell function. Required for normal hearing. The chain is Rho family-interacting cell polarization regulator 2 from Mus musculus (Mouse).